The primary structure comprises 256 residues: Probable ribosomal RNA small subunit methyltransferase A (256 aa).

H8, L10, G34, E55, D83, and N98 together coordinate S-adenosyl-L-methionine.

Belongs to the class I-like SAM-binding methyltransferase superfamily. rRNA adenine N(6)-methyltransferase family. RsmA subfamily.

It is found in the cytoplasm. Its function is as follows. Specifically dimethylates two adjacent adenosines in the loop of a conserved hairpin near the 3'-end of 16S rRNA in the 30S particle. May play a critical role in biogenesis of 30S subunits. In Methanospirillum hungatei JF-1 (strain ATCC 27890 / DSM 864 / NBRC 100397 / JF-1), this protein is Probable ribosomal RNA small subunit methyltransferase A.